The sequence spans 276 residues: MALVKTKPTSPGRRSMVKVVNPDLHKGAPHAPLLEKQFQKSGRNNNGHITTRHKGGGHKHHYRIVDFKRNDKDGIPAKIERLEYDPNRSANIALVLFADGERRYIIAPKGAVVGQAVANGPEAPIKAGNNLPIRNIPVGTTIHCVEILPGKGAQIARSAGTSAVLLAREGIYAQVRLRSGEVRRVHIECRATIGEVGNEEHSLRQIGKAGATRWRGIRPTVRGVAMNPVDHPHGGGEGKTAAGRDPVSPWGTPTKGYRTRSNKRTTSMIVQRRHKR.

2 disordered regions span residues 37 to 59 and 224 to 276; these read QFQK…GGHK and VAMN…RHKR. Positions 50-59 are enriched in basic residues; that stretch reads TTRHKGGGHK.

It belongs to the universal ribosomal protein uL2 family. As to quaternary structure, part of the 50S ribosomal subunit. Forms a bridge to the 30S subunit in the 70S ribosome.

Functionally, one of the primary rRNA binding proteins. Required for association of the 30S and 50S subunits to form the 70S ribosome, for tRNA binding and peptide bond formation. It has been suggested to have peptidyltransferase activity; this is somewhat controversial. Makes several contacts with the 16S rRNA in the 70S ribosome. The protein is Large ribosomal subunit protein uL2 of Ralstonia nicotianae (strain ATCC BAA-1114 / GMI1000) (Ralstonia solanacearum).